The primary structure comprises 404 residues: Inosine-5'-monophosphate dehydrogenase (404 aa).

NAD(+)-binding positions include D172 and 222 to 224 (GIG). K(+)-binding residues include G224 and G226. IMP is bound at residue S227. C229 contacts K(+). C229 (thioimidate intermediate) is an active-site residue. Residues 262-264 (DGG), 285-286 (GN), and 309-313 (YVGMG) each bind IMP. The active-site Proton acceptor is R325. E340 is a binding site for IMP. Residues E394, S395, and H396 each contribute to the K(+) site.

The protein belongs to the IMPDH/GMPR family. Homotetramer. Requires K(+) as cofactor.

The enzyme catalyses IMP + NAD(+) + H2O = XMP + NADH + H(+). It participates in purine metabolism; XMP biosynthesis via de novo pathway; XMP from IMP: step 1/1. Mycophenolic acid (MPA) is a non-competitive inhibitor that prevents formation of the closed enzyme conformation by binding to the same site as the amobile flap. In contrast, mizoribine monophosphate (MZP) is a competitive inhibitor that induces the closed conformation. MPA is a potent inhibitor of mammalian IMPDHs but a poor inhibitor of the bacterial enzymes. MZP is a more potent inhibitor of bacterial IMPDH. Functionally, catalyzes the conversion of inosine 5'-phosphate (IMP) to xanthosine 5'-phosphate (XMP), the first committed and rate-limiting step in the de novo synthesis of guanine nucleotides, and therefore plays an important role in the regulation of cell growth. Essential for mouse infection by tick bite and critical for the survival in environments that appear to lack sufficient amounts of guanine, guanosine, and/or deoxyguanosine to support spirochete growth, such as mammalian host tissues. The chain is Inosine-5'-monophosphate dehydrogenase from Borreliella burgdorferi (strain ATCC 35210 / DSM 4680 / CIP 102532 / B31) (Borrelia burgdorferi).